The chain runs to 663 residues: Guanine nucleotide exchange factor subunit RGP1 (663 aa).

Phosphoserine is present on residues serine 351, serine 354, serine 357, serine 363, serine 364, and serine 370. Positions 412–443 (GKDEDSSDPEPNDSHFSNEMVTSAESSLRSDA) are disordered. The span at 426–440 (HFSNEMVTSAESSLR) shows a compositional bias: polar residues.

The protein belongs to the RGP1 family. As to quaternary structure, forms a complex with RIC1.

It localises to the golgi apparatus. Its function is as follows. The RIC1-RGP1 complex acts as a guanine nucleotide exchange factor (GEF), which activates YPT6 by exchanging bound GDP for free GTP. It is thereby required for efficient fusion of endosome-derived vesicles with the Golgi. The RIC1-RGP1 participates in the recycling of SNC1, presumably by mediating fusion of endosomal vesicles with the Golgi compartment. In terms of biological role, required for proper mitotic growth. This Saccharomyces cerevisiae (strain ATCC 204508 / S288c) (Baker's yeast) protein is Guanine nucleotide exchange factor subunit RGP1.